A 307-amino-acid chain; its full sequence is Thymidylate synthase (307 aa).

Residues R26 and 160 to 161 (RR) each bind dUMP. C180 (nucleophile) is an active-site residue. DUMP-binding positions include 209 to 212 (RSCD), N220, and 250 to 252 (HIY). D212 is a binding site for (6R)-5,10-methylene-5,6,7,8-tetrahydrofolate. (6R)-5,10-methylene-5,6,7,8-tetrahydrofolate is bound at residue A306.

The protein belongs to the thymidylate synthase family. Bacterial-type ThyA subfamily. As to quaternary structure, homodimer.

It localises to the cytoplasm. It carries out the reaction dUMP + (6R)-5,10-methylene-5,6,7,8-tetrahydrofolate = 7,8-dihydrofolate + dTMP. The protein operates within pyrimidine metabolism; dTTP biosynthesis. Its function is as follows. Catalyzes the reductive methylation of 2'-deoxyuridine-5'-monophosphate (dUMP) to 2'-deoxythymidine-5'-monophosphate (dTMP) while utilizing 5,10-methylenetetrahydrofolate (mTHF) as the methyl donor and reductant in the reaction, yielding dihydrofolate (DHF) as a by-product. This enzymatic reaction provides an intracellular de novo source of dTMP, an essential precursor for DNA biosynthesis. In Rhizobium rhizogenes (strain K84 / ATCC BAA-868) (Agrobacterium radiobacter), this protein is Thymidylate synthase.